A 437-amino-acid chain; its full sequence is Serine carboxypeptidase-like 17 (437 aa).

Residues 1–26 (MGKECYYLSWILKFHLLLVLIQLVDS) form the signal peptide. Cystine bridges form between C85–C327, C249–C263, and C287–C293. The N-linked (GlcNAc...) asparagine glycan is linked to N106. The active site involves S181. The active site involves D362. N378 carries N-linked (GlcNAc...) asparagine glycosylation. H415 is an active-site residue.

This sequence belongs to the peptidase S10 family. Expressed in seedlings and siliques.

Its subcellular location is the secreted. Its function is as follows. Probable carboxypeptidase. This Arabidopsis thaliana (Mouse-ear cress) protein is Serine carboxypeptidase-like 17 (SCPL17).